Consider the following 284-residue polypeptide: Prolyl 4-hydroxylase subunit alpha (284 aa).

One can recognise a Fe2OG dioxygenase domain in the interval 169–284 (NFNSIKTQTQ…PRIAITTWIY (116 aa)). 3 residues coordinate Fe cation: histidine 191, aspartate 193, and histidine 266. Arginine 276 lines the 2-oxoglutarate pocket.

This sequence belongs to the P4HA family. As to quaternary structure, heterotetramer of two alpha-1 chains and two beta chains (the beta chain is the multi-functional PDI). Requires Fe(2+) as cofactor. The cofactor is L-ascorbate.

Its subcellular location is the cytoplasm. The catalysed reaction is L-prolyl-[Skp1 protein] + 2-oxoglutarate + O2 = trans-4-hydroxy-L-prolyl-[Skp1 protein] + succinate + CO2. With respect to regulation, inhibited by the prolyl-hydroxylase inhibitors alpha,alpha'-dipyridyl and ethyl 3,4-dihydroxybenzoate. Its function is as follows. Catalyzes the post-translational formation of 4-hydroxyproline. Probably hydroxylates skp1 on Pro-143. This chain is Prolyl 4-hydroxylase subunit alpha (phyA), found in Dictyostelium discoideum (Social amoeba).